Consider the following 417-residue polypeptide: Serine hydroxymethyltransferase (417 aa).

(6S)-5,6,7,8-tetrahydrofolate-binding positions include Leu-121 and Gly-125–Leu-127. The residue at position 229 (Lys-229) is an N6-(pyridoxal phosphate)lysine. Residue Ser-355–Phe-357 participates in (6S)-5,6,7,8-tetrahydrofolate binding.

This sequence belongs to the SHMT family. Homodimer. It depends on pyridoxal 5'-phosphate as a cofactor.

It is found in the cytoplasm. It carries out the reaction (6R)-5,10-methylene-5,6,7,8-tetrahydrofolate + glycine + H2O = (6S)-5,6,7,8-tetrahydrofolate + L-serine. It participates in one-carbon metabolism; tetrahydrofolate interconversion. Its pathway is amino-acid biosynthesis; glycine biosynthesis; glycine from L-serine: step 1/1. Functionally, catalyzes the reversible interconversion of serine and glycine with tetrahydrofolate (THF) serving as the one-carbon carrier. This reaction serves as the major source of one-carbon groups required for the biosynthesis of purines, thymidylate, methionine, and other important biomolecules. Also exhibits THF-independent aldolase activity toward beta-hydroxyamino acids, producing glycine and aldehydes, via a retro-aldol mechanism. This is Serine hydroxymethyltransferase from Shewanella sp. (strain W3-18-1).